A 1041-amino-acid chain; its full sequence is RAS protein activator like-3 (1041 aa).

The disordered stretch occupies residues 1–59; sequence MKPECGQTMFRTFWSRSRDSSAMDPPLQSEEDSQTQPSLPSPLTSYRWHTGGSGEKAAG. The segment covering 34-44 has biased composition (polar residues); it reads QTQPSLPSPLT. Residues Ser41, Ser74, Ser187, Ser189, Ser190, Ser193, Ser239, Ser252, Ser256, and Ser259 each carry the phosphoserine modification. Positions 218–243 form a coiled coil; that stretch reads SNQVHNVRKLLKRLKEKKRAKSELGA. The 102-residue stretch at 220–321 folds into the PH domain; the sequence is QVHNVRKLLK…WIEDLRRQFQ (102 aa). The tract at residues 234 to 256 is disordered; that stretch reads KKRAKSELGAYTPRDGPPSALGS. A Phosphothreonine modification is found at Thr262. Residues 312–430 enclose the C2 domain; that stretch reads WIEDLRRQFQ…APAAGLERWF (119 aa). Residues 500 to 708 enclose the Ras-GAP domain; it reads GRAQALVTDL…PAMQHFLDQV (209 aa). The disordered stretch occupies residues 790 to 910; it reads GEKPGFLAPR…PGDRYQTTGT (121 aa). Phosphoserine is present on residues Ser813 and Ser816. Basic residues predominate over residues 850 to 866; the sequence is RPTHRRPSAGSKPRPKG. Residues 931–1013 are a coiled coil; sequence QKALSLLVES…LRDSLQSLQL (83 aa). Residues 1016–1041 are disordered; the sequence is KTPGSRSQPLPLKAPCVNGADLSMGT.

Predominantly expressed in hematopoietic tissues.

It localises to the cytoplasm. Its subcellular location is the cell cortex. Functionally, functions as a Ras GTPase-activating protein. Plays an important role in the expansion and functions of natural killer T (NKT) cells in the liver by negatively regulating RAS activity and the down-stream ERK signaling pathway. The protein is RAS protein activator like-3 (Rasal3) of Mus musculus (Mouse).